A 47-amino-acid polypeptide reads, in one-letter code: Large ribosomal subunit protein bL27c (47 aa).

The interval 1 to 21 is disordered; sequence STKNGRDSNAQRLGVKKYGGE.

It belongs to the bacterial ribosomal protein bL27 family.

It localises to the plastid. The protein resides in the chloroplast. This is Large ribosomal subunit protein bL27c (rpl27) from Porphyridium purpureum (Red alga).